A 387-amino-acid chain; its full sequence is 3-ketoacyl-CoA thiolase (387 aa).

The active-site Acyl-thioester intermediate is Cys-91. Catalysis depends on proton acceptor residues His-343 and Cys-373.

This sequence belongs to the thiolase-like superfamily. Thiolase family. Heterotetramer of two alpha chains (FadB) and two beta chains (FadA).

It is found in the cytoplasm. The enzyme catalyses an acyl-CoA + acetyl-CoA = a 3-oxoacyl-CoA + CoA. The protein operates within lipid metabolism; fatty acid beta-oxidation. In terms of biological role, catalyzes the final step of fatty acid oxidation in which acetyl-CoA is released and the CoA ester of a fatty acid two carbons shorter is formed. The polypeptide is 3-ketoacyl-CoA thiolase (Shewanella oneidensis (strain ATCC 700550 / JCM 31522 / CIP 106686 / LMG 19005 / NCIMB 14063 / MR-1)).